Reading from the N-terminus, the 118-residue chain is Cycloviolacin-O8 (118 aa).

The N-terminal stretch at 1–22 is a signal peptide; that stretch reads MEMKNMVVGLFLIAAFALPALA. The propeptide occupies 23-84; sequence TNFEKDFITH…THSNSINALG (62 aa). The segment at residues 85–115 is a cross-link (cyclopeptide (Gly-Asn)); the sequence is GTLPCGESCVWIPCISSVVGCSCKSKVCYKN. 3 disulfide bridges follow: Cys89-Cys105, Cys93-Cys107, and Cys98-Cys112. Residues 116–118 constitute a propeptide that is removed on maturation; that stretch reads SLA.

In terms of processing, cycloviolacin-O8 is a cyclic peptide. As to expression, expressed in leaves, petals, petioles and roots but not in runners (at protein level).

In terms of biological role, probably participates in a plant defense mechanism. The polypeptide is Cycloviolacin-O8 (Voc1) (Viola odorata (Sweet violet)).